We begin with the raw amino-acid sequence, 293 residues long: Homeobox protein ceh-24 (293 aa).

2 stretches are compositionally biased toward basic and acidic residues: residues 1–15 and 22–38; these read MSEK…KKDE and QETK…MKIK. Disordered stretches follow at residues 1 to 38 and 203 to 256; these read MSEK…MKIK and EKEK…SNGV. The segment at residues 144-203 is a DNA-binding region (homeobox); it reads RRKRRVLFSQAQVYELERRFKQAKYLTAPEREQLANSIRLTPTQVKIWFQNHRYKCKRQE.

Belongs to the NK-2 homeobox family. Expressed in the 8 vulval muscles, 8-10 ventral neurons in the head and in the most posterior pharyngeal muscle cell, m8.

Its subcellular location is the nucleus. In terms of biological role, probable transcriptional regulator that is required in neural development for the normal formation of sublateral cholinergic motor neuron processes. Plays a role in regulating the expression of acetylcholine transporter protein unc-17 in the sublateral processes. In particular, it is required in sublateral motor neurons for a left-right turning behavior that occurs during the lethargus phase of the normal sleep process called 'flipping'. During 'flipping' animals rotate 180 degrees about their longitudinal axis. This Caenorhabditis briggsae protein is Homeobox protein ceh-24.